Reading from the N-terminus, the 439-residue chain is uncharacterized protein (439 aa).

Residues Gln268–Val284 show a composition bias toward low complexity. The disordered stretch occupies residues Gln268–His439. Residues Gln285–Pro328 are compositionally biased toward pro residues. Over residues Gln350–His439 the composition is skewed to low complexity.

This is an uncharacterized protein from Dictyostelium discoideum (Social amoeba).